A 119-amino-acid polypeptide reads, in one-letter code: MVKLAFPRELRLLTPSHFTFVFQQPQRAGTPQITILGRLNSLGHPRIGLTVAKKNVKRAHERNRIKRLTRESFRLRQHELPPMDFVVVAKRGVADLDNRALSEALEKLWRRHCRLARGS.

Belongs to the RnpA family. Consists of a catalytic RNA component (M1 or rnpB) and a protein subunit.

It carries out the reaction Endonucleolytic cleavage of RNA, removing 5'-extranucleotides from tRNA precursor.. RNaseP catalyzes the removal of the 5'-leader sequence from pre-tRNA to produce the mature 5'-terminus. It can also cleave other RNA substrates such as 4.5S RNA. The protein component plays an auxiliary but essential role in vivo by binding to the 5'-leader sequence and broadening the substrate specificity of the ribozyme. This Klebsiella pneumoniae (strain 342) protein is Ribonuclease P protein component.